The chain runs to 336 residues: Tyrosine recombinase XerC (336 aa).

The Core-binding (CB) domain occupies 14 to 106 (VANCRWLGEF…SVKSFYRFLL (93 aa)). The Tyr recombinase domain occupies 127 to 330 (KIPDFLSEEE…TFNRLRDAYT (204 aa)). Residues Arg-183, Lys-207, His-282, Arg-285, and His-308 contribute to the active site. Tyr-317 functions as the O-(3'-phospho-DNA)-tyrosine intermediate in the catalytic mechanism.

It belongs to the 'phage' integrase family. XerC subfamily. As to quaternary structure, forms a cyclic heterotetrameric complex composed of two molecules of XerC and two molecules of XerD.

The protein resides in the cytoplasm. In terms of biological role, site-specific tyrosine recombinase, which acts by catalyzing the cutting and rejoining of the recombining DNA molecules. The XerC-XerD complex is essential to convert dimers of the bacterial chromosome into monomers to permit their segregation at cell division. It also contributes to the segregational stability of plasmids. The polypeptide is Tyrosine recombinase XerC (Chlorobaculum tepidum (strain ATCC 49652 / DSM 12025 / NBRC 103806 / TLS) (Chlorobium tepidum)).